A 228-amino-acid polypeptide reads, in one-letter code: RNA chaperone ProQ (228 aa).

A disordered region spans residues 107–178 (KARVQAQRAE…REEKHTPVSD (72 aa)). Basic and acidic residues-rich tracts occupy residues 117–136 (QQAKKREAAAAAGEKEDAPR) and 146–175 (RRKEGAERKPRADKPTTKAPRAPREEKHTP).

Belongs to the ProQ family.

It localises to the cytoplasm. Its function is as follows. RNA chaperone with significant RNA binding, RNA strand exchange and RNA duplexing activities. May regulate ProP activity through an RNA-based, post-transcriptional mechanism. This is RNA chaperone ProQ from Salmonella agona (strain SL483).